Consider the following 29-residue polypeptide: Cytochrome b6-f complex subunit 8 (29 aa).

Residues 3–23 traverse the membrane as a helical segment; that stretch reads LITITWASVMVAFTFSLSLVV.

This sequence belongs to the PetN family. As to quaternary structure, the 4 large subunits of the cytochrome b6-f complex are cytochrome b6, subunit IV (17 kDa polypeptide, PetD), cytochrome f and the Rieske protein, while the 4 small subunits are PetG, PetL, PetM and PetN. The complex functions as a dimer.

The protein resides in the plastid. The protein localises to the chloroplast thylakoid membrane. Component of the cytochrome b6-f complex, which mediates electron transfer between photosystem II (PSII) and photosystem I (PSI), cyclic electron flow around PSI, and state transitions. In Chaetosphaeridium globosum (Charophycean green alga), this protein is Cytochrome b6-f complex subunit 8.